The primary structure comprises 232 residues: Probable caffeoyl-CoA O-methyltransferase At4g26220 (232 aa).

Residue Lys7 coordinates substrate. Residues Thr49, Glu71, 73–74 (GV), Ser79, Asp97, and Ala126 each bind S-adenosyl-L-methionine. Position 149 (Asp149) interacts with substrate. Residue Asp149 coordinates a divalent metal cation. Position 151 (Asp151) interacts with S-adenosyl-L-methionine. A divalent metal cation is bound by residues Asp175 and Asn176.

The protein belongs to the class I-like SAM-binding methyltransferase superfamily. Cation-dependent O-methyltransferase family. CCoAMT subfamily. The cofactor is a divalent metal cation.

The catalysed reaction is (E)-caffeoyl-CoA + S-adenosyl-L-methionine = (E)-feruloyl-CoA + S-adenosyl-L-homocysteine + H(+). The protein operates within aromatic compound metabolism; phenylpropanoid biosynthesis. Methylates caffeoyl-CoA to feruloyl-CoA and 5-hydroxyferuloyl-CoA to sinapoyl-CoA. Plays a role in the synthesis of feruloylated polysaccharides. Involved in the reinforcement of the plant cell wall. Also involved in the responding to wounding or pathogen challenge by the increased formation of cell wall-bound ferulic acid polymers. The polypeptide is Probable caffeoyl-CoA O-methyltransferase At4g26220 (Arabidopsis thaliana (Mouse-ear cress)).